Here is a 443-residue protein sequence, read N- to C-terminus: ATP-dependent protease ATPase subunit HslU (443 aa).

ATP contacts are provided by residues isoleucine 18, 60–65 (GVGKTE), aspartate 256, glutamate 321, and arginine 393.

Belongs to the ClpX chaperone family. HslU subfamily. A double ring-shaped homohexamer of HslV is capped on each side by a ring-shaped HslU homohexamer. The assembly of the HslU/HslV complex is dependent on binding of ATP.

It is found in the cytoplasm. Functionally, ATPase subunit of a proteasome-like degradation complex; this subunit has chaperone activity. The binding of ATP and its subsequent hydrolysis by HslU are essential for unfolding of protein substrates subsequently hydrolyzed by HslV. HslU recognizes the N-terminal part of its protein substrates and unfolds these before they are guided to HslV for hydrolysis. The sequence is that of ATP-dependent protease ATPase subunit HslU from Escherichia coli O17:K52:H18 (strain UMN026 / ExPEC).